The sequence spans 356 residues: Vesicular integral-membrane protein VIP36 (356 aa).

A signal peptide spans methionine 1 to alanine 44. Topologically, residues aspartate 45 to arginine 322 are lumenal. An L-type lectin-like domain is found at glutamate 52 to leucine 276. Positions 96 and 131 each coordinate a carbohydrate. Positions 162, 164, and 166 each coordinate Ca(2+). Tyrosine 164–asparagine 166 is an a carbohydrate binding site. An N-linked (GlcNAc...) asparagine glycan is attached at asparagine 183. Histidine 190 contributes to the a carbohydrate binding site. Residue aspartate 193 participates in Ca(2+) binding. Cysteine 202 and cysteine 239 form a disulfide bridge. Glycine 260–leucine 262 provides a ligand contact to a carbohydrate. The helical transmembrane segment at valine 323 to phenylalanine 345 threads the bilayer. Residues glutamine 346–tyrosine 356 are Cytoplasmic-facing.

The cofactor is Ca(2+). As to expression, ubiquitous.

It localises to the endoplasmic reticulum-Golgi intermediate compartment membrane. Its subcellular location is the golgi apparatus membrane. The protein resides in the endoplasmic reticulum membrane. Functionally, plays a role as an intracellular lectin in the early secretory pathway. Interacts with N-acetyl-D-galactosamine and high-mannose type glycans and may also bind to O-linked glycans. Involved in the transport and sorting of glycoproteins carrying high mannose-type glycans. The polypeptide is Vesicular integral-membrane protein VIP36 (LMAN2) (Homo sapiens (Human)).